A 250-amino-acid chain; its full sequence is 2,3-bisphosphoglycerate-dependent phosphoglycerate mutase (250 aa).

Substrate is bound by residues 10–17, 23–24, arginine 62, 89–92, lysine 100, 116–117, and 185–186; these read RHGESQWN, TG, ERHY, RR, and GN. Histidine 11 functions as the Tele-phosphohistidine intermediate in the catalytic mechanism. Residue glutamate 89 is the Proton donor/acceptor of the active site.

The protein belongs to the phosphoglycerate mutase family. BPG-dependent PGAM subfamily. Homodimer.

It carries out the reaction (2R)-2-phosphoglycerate = (2R)-3-phosphoglycerate. Its pathway is carbohydrate degradation; glycolysis; pyruvate from D-glyceraldehyde 3-phosphate: step 3/5. Catalyzes the interconversion of 2-phosphoglycerate and 3-phosphoglycerate. The protein is 2,3-bisphosphoglycerate-dependent phosphoglycerate mutase of Shigella dysenteriae serotype 1 (strain Sd197).